The following is a 1011-amino-acid chain: Unconventional myosin ID (1011 aa).

Residues 7 to 690 (AGVQDFVLLD…TLFALEHQRN (684 aa)) form the Myosin motor domain. ATP is bound at residue 100–107 (GESGAGKT). An actin-binding region spans residues 567 to 589 (MADLVVTLLKKEPFYVRCIKPND). IQ domains lie at 694 to 714 (PHIV…RNFK) and 716 to 736 (MKAA…SYVQ). One can recognise a TH1 domain in the interval 806–1007 (AGRRPYWGQA…EGNIIFEVPA (202 aa)).

This sequence belongs to the TRAFAC class myosin-kinesin ATPase superfamily. Myosin family. In terms of assembly, binds to F-actin. Interacts with arm. Interacts with shg. Interacts with ds (via intracellular region). As to expression, in the embryo, expressed in gastric caeca, midgut cells of the proventriculus, and in the mid and hindgut. In the larval gut brush border, expression is in the terminal web domain. In the adult gut brush border, expression remains in the web domain and has also moved into the microvilli. Also expressed at low levels in follicle cells during oogenesis.

The protein resides in the cytoplasm. Its subcellular location is the cell cortex. It is found in the cytoskeleton. It localises to the cell membrane. The protein localises to the cell junction. The protein resides in the adherens junction. Its subcellular location is the cell projection. Functionally, unconventional myosin that functions as actin-based motor protein with ATPase activity. Binds to membranes enriched in phosphatidylinositol 4-5-bisphosphate, and can glide along actin filaments when anchored to a lipid bilayer. Generates left-right asymmetry at the level of single cells, organs and the whole body via its interaction with the actin cytoskeleton, both in the embryo and the adult. Normal left-right asymmetry of the larval midgut and hindgut requires expression in the embryonic hindgut epithelium during a critical time period, 10 to 12.75 hours after egg laying. This period corresponds to a late stage of germband retraction, and precedes left-right asymmetric morphogenesis. Expression in segment H1 of the imaginal ring is required at 0 to 24 hours after pupation for changes of cell shape and orientation in the H2 segment, which then gives rise to normal, dextral looping of the adult hindgut. Required during a critical period, 126-132 hours after egg laying, for normal, dextral rotation of the adult male genitalia. Has a double role by promoting dextral rotation in the posterior compartment of segment A8 of the male genital disk, and in repressing sinistral looping in the anterior compartment. The polypeptide is Unconventional myosin ID (Drosophila melanogaster (Fruit fly)).